We begin with the raw amino-acid sequence, 152 residues long: Transcriptional regulator MraZ (152 aa).

SpoVT-AbrB domains follow at residues 5 to 52 and 81 to 124; these read ASAI…PIHE and AHEV…DEQS.

This sequence belongs to the MraZ family. In terms of assembly, forms oligomers.

The protein localises to the cytoplasm. It localises to the nucleoid. This is Transcriptional regulator MraZ from Shewanella baltica (strain OS155 / ATCC BAA-1091).